The following is a 31-amino-acid chain: Photosystem II reaction center protein Psb30 (31 aa).

A helical membrane pass occupies residues 5–25 (IQLTSLLLIVIAGPLVIALLF).

This sequence belongs to the Psb30/Ycf12 family. In terms of assembly, PSII is composed of 1 copy each of membrane proteins PsbA, PsbB, PsbC, PsbD, PsbE, PsbF, PsbH, PsbI, PsbJ, PsbK, PsbL, PsbM, PsbT, PsbX, PsbY, PsbZ, Psb30/Ycf12, peripheral proteins of the oxygen-evolving complex and a large number of cofactors. It forms dimeric complexes.

The protein localises to the plastid. It localises to the chloroplast thylakoid membrane. Functionally, a core subunit of photosystem II (PSII), probably helps stabilize the reaction center. In Phacus acuminatus, this protein is Photosystem II reaction center protein Psb30.